Consider the following 71-residue polypeptide: MSKTKTFEENLQDLETIVNKLENGDVPLEEAISEFQKGMLLSKELQKTLQAAEKTLVKVMQADGTEVDMDD.

This sequence belongs to the XseB family. In terms of assembly, heterooligomer composed of large and small subunits.

The protein localises to the cytoplasm. It carries out the reaction Exonucleolytic cleavage in either 5'- to 3'- or 3'- to 5'-direction to yield nucleoside 5'-phosphates.. Functionally, bidirectionally degrades single-stranded DNA into large acid-insoluble oligonucleotides, which are then degraded further into small acid-soluble oligonucleotides. This Streptococcus pyogenes serotype M1 protein is Exodeoxyribonuclease 7 small subunit.